The sequence spans 414 residues: Enolase (414 aa).

Glutamine 162 contributes to the (2R)-2-phosphoglycerate binding site. The active-site Proton donor is the glutamate 204. Mg(2+) contacts are provided by aspartate 239, glutamate 280, and aspartate 307. (2R)-2-phosphoglycerate-binding residues include lysine 332, arginine 361, serine 362, and lysine 383. Residue lysine 332 is the Proton acceptor of the active site.

Belongs to the enolase family. Requires Mg(2+) as cofactor.

Its subcellular location is the cytoplasm. It is found in the secreted. The protein resides in the cell surface. It carries out the reaction (2R)-2-phosphoglycerate = phosphoenolpyruvate + H2O. It functions in the pathway carbohydrate degradation; glycolysis; pyruvate from D-glyceraldehyde 3-phosphate: step 4/5. In terms of biological role, catalyzes the reversible conversion of 2-phosphoglycerate (2-PG) into phosphoenolpyruvate (PEP). It is essential for the degradation of carbohydrates via glycolysis. In Campylobacter jejuni (strain RM1221), this protein is Enolase.